We begin with the raw amino-acid sequence, 434 residues long: CCA tRNA nucleotidyltransferase 1, mitochondrial (434 aa).

The transit peptide at 1–41 directs the protein to the mitochondrion; that stretch reads MQSVLYPWHRQVLRCSWSRLCLLKRYLFTMKLQSPEFQSLF. Residues Gly-64 and Arg-67 each coordinate ATP. CTP contacts are provided by Gly-64 and Arg-67. 2 residues coordinate Mg(2+): Asp-77 and Asp-79. ATP is bound by residues Arg-151, Asp-194, Arg-197, Arg-200, and Arg-203. Positions 151, 194, 197, 200, and 203 each coordinate CTP. The residue at position 400 (Ser-400) is a Phosphoserine. Residue Lys-402 is modified to N6-acetyllysine.

Belongs to the tRNA nucleotidyltransferase/poly(A) polymerase family. Monomer, and homodimer. Mg(2+) is required as a cofactor.

It is found in the mitochondrion. The protein resides in the cytoplasm. The protein localises to the nucleus. It catalyses the reaction a tRNA precursor + 2 CTP + ATP = a tRNA with a 3' CCA end + 3 diphosphate. The enzyme catalyses a tRNA with a 3' CCA end + 2 CTP + ATP = a tRNA with a 3' CCACCA end + 3 diphosphate. Functionally, nucleotidyltransferase that catalyzes the addition and repair of the essential 3'-terminal CCA sequence in tRNAs, which is necessary for the attachment of amino acids to the 3' terminus of tRNA molecules, using CTP and ATP as substrates. tRNA 3'-terminal CCA addition is required both for tRNA processing and repair. Promotes tRNA repair and recycling downstream of the ribosome-associated quality control (RQC) pathway by mediating addition of the tRNA 3'-terminal CCA following cleavage by ANKZF1 and repair by ELAC1. Also involved in tRNA surveillance by mediating tandem CCA addition to generate a CCACCA at the 3' terminus of unstable tRNAs and tRNA-like transcripts. While stable tRNAs receive only 3'-terminal CCA, unstable tRNAs beginning with GG are marked with CCACCA and rapidly degraded. The structural flexibility of RNA controls the choice between CCA versus CCACCA addition: following the first CCA addition cycle, nucleotide-binding to the active site triggers a clockwise screw motion, producing torque on the RNA. This ejects stable RNAs, whereas unstable RNAs are refolded while bound to the enzyme and subjected to a second CCA catalytic cycle. The polypeptide is CCA tRNA nucleotidyltransferase 1, mitochondrial (Trnt1) (Mus musculus (Mouse)).